A 454-amino-acid chain; its full sequence is UDP-N-acetylmuramoylalanine--D-glutamate ligase (454 aa).

118–124 (GTNGKTT) lines the ATP pocket.

This sequence belongs to the MurCDEF family.

The protein localises to the cytoplasm. The catalysed reaction is UDP-N-acetyl-alpha-D-muramoyl-L-alanine + D-glutamate + ATP = UDP-N-acetyl-alpha-D-muramoyl-L-alanyl-D-glutamate + ADP + phosphate + H(+). It participates in cell wall biogenesis; peptidoglycan biosynthesis. Its function is as follows. Cell wall formation. Catalyzes the addition of glutamate to the nucleotide precursor UDP-N-acetylmuramoyl-L-alanine (UMA). The polypeptide is UDP-N-acetylmuramoylalanine--D-glutamate ligase (Thermosynechococcus vestitus (strain NIES-2133 / IAM M-273 / BP-1)).